Consider the following 833-residue polypeptide: Leucine--tRNA ligase (833 aa).

Residues 41–52 (PYPSGAGLHVGH) carry the 'HIGH' region motif. The 'KMSKS' region motif lies at 610–614 (KMSKS). Residue Lys-613 coordinates ATP.

It belongs to the class-I aminoacyl-tRNA synthetase family.

It is found in the cytoplasm. It catalyses the reaction tRNA(Leu) + L-leucine + ATP = L-leucyl-tRNA(Leu) + AMP + diphosphate. This chain is Leucine--tRNA ligase, found in Streptococcus agalactiae serotype Ia (strain ATCC 27591 / A909 / CDC SS700).